A 609-amino-acid polypeptide reads, in one-letter code: Autophagy-related protein 22-1 (609 aa).

4 helical membrane-spanning segments follow: residues 35 to 55 (YGWA…PITL), 117 to 137 (TASF…ILII), 151 to 171 (LLLM…LGVV), and 176 to 196 (MVGA…FVLL). Residues 214–231 (AREPRPALDDSRAQEGHS) are compositionally biased toward basic and acidic residues. The disordered stretch occupies residues 214–240 (AREPRPALDDSRAQEGHSDTTNGIEHG). A glycan (N-linked (GlcNAc...) asparagine) is linked at Asn-244. The helical transmembrane segment at 287–307 (IGIGYIGAIILQIVCILVVIA) threads the bilayer. Asn-309 is a glycosylation site (N-linked (GlcNAc...) asparagine). The next 3 membrane-spanning stretches (helical) occupy residues 317–337 (LVLF…ALWL), 381–401 (ILLF…VSGT), and 415–435 (AALG…AFSW). A glycan (N-linked (GlcNAc...) asparagine) is linked at Asn-443. 4 consecutive transmembrane segments (helical) span residues 450-470 (IIAC…GFIP), 477-497 (FLGL…GLVM), 522-542 (ALYA…VGII), and 552-572 (AFVF…LVDV).

Belongs to the ATG22 family.

Its subcellular location is the vacuole membrane. Vacuolar effluxer which mediate the efflux of amino acids resulting from autophagic degradation. The release of autophagic amino acids allows the maintenance of protein synthesis and viability during nitrogen starvation. The protein is Autophagy-related protein 22-1 (atg22-1) of Aspergillus fumigatus (strain ATCC MYA-4609 / CBS 101355 / FGSC A1100 / Af293) (Neosartorya fumigata).